Consider the following 146-residue polypeptide: Large ribosomal subunit protein uL15 (146 aa).

Positions 1–54 are disordered; that stretch reads MNLTDLRPADGSKQSGNFRRGRGHGSGNGKTAGKGHKGQKARSGAPRVGFEGGQ.

The protein belongs to the universal ribosomal protein uL15 family. Part of the 50S ribosomal subunit.

Binds to the 23S rRNA. In Lachnoclostridium phytofermentans (strain ATCC 700394 / DSM 18823 / ISDg) (Clostridium phytofermentans), this protein is Large ribosomal subunit protein uL15.